The following is a 465-amino-acid chain: Ribulose bisphosphate carboxylase large chain (465 aa).

Lys4 carries the N6,N6,N6-trimethyllysine modification. 2 residues coordinate substrate: Asn113 and Thr163. Lys165 (proton acceptor) is an active-site residue. Lys167 provides a ligand contact to substrate. 3 residues coordinate Mg(2+): Lys191, Asp193, and Glu194. The residue at position 191 (Lys191) is an N6-carboxylysine. The active-site Proton acceptor is the His284. 3 residues coordinate substrate: Arg285, His317, and Ser369.

Belongs to the RuBisCO large chain family. Type I subfamily. As to quaternary structure, heterohexadecamer of 8 large chains and 8 small chains; disulfide-linked. The disulfide link is formed within the large subunit homodimers. It depends on Mg(2+) as a cofactor. In terms of processing, the disulfide bond which can form in the large chain dimeric partners within the hexadecamer appears to be associated with oxidative stress and protein turnover.

The protein localises to the plastid. It is found in the chloroplast. The catalysed reaction is 2 (2R)-3-phosphoglycerate + 2 H(+) = D-ribulose 1,5-bisphosphate + CO2 + H2O. It catalyses the reaction D-ribulose 1,5-bisphosphate + O2 = 2-phosphoglycolate + (2R)-3-phosphoglycerate + 2 H(+). RuBisCO catalyzes two reactions: the carboxylation of D-ribulose 1,5-bisphosphate, the primary event in carbon dioxide fixation, as well as the oxidative fragmentation of the pentose substrate in the photorespiration process. Both reactions occur simultaneously and in competition at the same active site. The sequence is that of Ribulose bisphosphate carboxylase large chain from Idesia polycarpa (Iigiri tree).